The primary structure comprises 364 residues: MDRNQWTLALMALMRFAHRAFINPVSPLPKFSRLAFTQGASRLYATLHVDAGLQDNVVDKAAKPYLSRRLKFNAEHFKQDVSELCTTLNADYNEGVMNAVLNTYKENFERGAVLWKATSKEDGVAFRFYERKKVDVVGPAINNSLISGNHGMIPLITSWANFKKNAIASCDFDPAKGLCKTWIWLGGRHPTRDLLVAPNVPGTIRSLERKLISAGLHTVRHAAVDWRSSTVNLYFWVPRPLTLPVVNTLITLPGTPPINEEKLTLMKPFFKPNGFTFATTIDTATGKFKRVSFYALRLDGNNLPIMGDQLATFFKDAPSNDKTEMNIVAWSFAGGSNGSSNYIKGERSYIGDLEQVLDAWGSPI.

Positions 1–22 (MDRNQWTLALMALMRFAHRAFI) are cleaved as a signal peptide. 2 N-linked (GlcNAc...) asparagine glycosylation sites follow: Asn142 and Asn337.

It belongs to the aromatic prenyltransferase family.

Functionally, prenyltransferase that attaches isoprenoid moieties to carbon atoms of aromatic substrates in an enzyme-catalyzed Friedel-Crafts reaction. This Talaromyces marneffei (strain ATCC 18224 / CBS 334.59 / QM 7333) (Penicillium marneffei) protein is Aromatic prenyltransferase.